We begin with the raw amino-acid sequence, 82 residues long: U16-lycotoxin-Ls1a (82 aa).

The first 22 residues, 1–22, serve as a signal peptide directing secretion; the sequence is MSPKVQALLLLVGLITFLAVHA. Residues 23-34 constitute a propeptide that is removed on maturation; the sequence is EEELSETVESER. 4 disulfides stabilise this stretch: Cys-36–Cys-51, Cys-43–Cys-56, Cys-50–Cys-67, and Cys-58–Cys-65.

This sequence belongs to the neurotoxin 02 (plectoxin) family. 04 (U16-lycotoxin) subfamily. Expressed by the venom gland.

Its subcellular location is the secreted. This is U16-lycotoxin-Ls1a from Lycosa singoriensis (Wolf spider).